The chain runs to 142 residues: D-aminoacyl-tRNA deacylase (142 aa).

The Gly-cisPro motif, important for rejection of L-amino acids signature appears at 133–134 (GP).

The protein belongs to the DTD family. Homodimer.

Its subcellular location is the cytoplasm. It catalyses the reaction glycyl-tRNA(Ala) + H2O = tRNA(Ala) + glycine + H(+). The enzyme catalyses a D-aminoacyl-tRNA + H2O = a tRNA + a D-alpha-amino acid + H(+). In terms of biological role, an aminoacyl-tRNA editing enzyme that deacylates mischarged D-aminoacyl-tRNAs. Also deacylates mischarged glycyl-tRNA(Ala), protecting cells against glycine mischarging by AlaRS. Acts via tRNA-based rather than protein-based catalysis; rejects L-amino acids rather than detecting D-amino acids in the active site. By recycling D-aminoacyl-tRNA to D-amino acids and free tRNA molecules, this enzyme counteracts the toxicity associated with the formation of D-aminoacyl-tRNA entities in vivo and helps enforce protein L-homochirality. This is D-aminoacyl-tRNA deacylase from Acidothermus cellulolyticus (strain ATCC 43068 / DSM 8971 / 11B).